A 456-amino-acid polypeptide reads, in one-letter code: Bifunctional protein GlmU (456 aa).

Residues 1–229 (MLNNAMSVVI…LSEVEGVNNR (229 aa)) are pyrophosphorylase. Residues 11 to 14 (LAAG), Lys-25, Gln-76, 81 to 82 (GT), 103 to 105 (YGD), Gly-140, Glu-154, Asn-169, and Asn-227 each bind UDP-N-acetyl-alpha-D-glucosamine. Asp-105 is a binding site for Mg(2+). Asn-227 contacts Mg(2+). The linker stretch occupies residues 230-250 (LQLSRLERVYQSEQAEKLLLA). Positions 251 to 456 (GVMLRDPARF…EGWRRPVKKK (206 aa)) are N-acetyltransferase. UDP-N-acetyl-alpha-D-glucosamine contacts are provided by Arg-333 and Lys-351. His-363 acts as the Proton acceptor in catalysis. UDP-N-acetyl-alpha-D-glucosamine-binding residues include Tyr-366 and Asn-377. Acetyl-CoA contacts are provided by residues Ala-380, 386–387 (NY), Ser-405, Ala-423, and Arg-440.

The protein in the N-terminal section; belongs to the N-acetylglucosamine-1-phosphate uridyltransferase family. In the C-terminal section; belongs to the transferase hexapeptide repeat family. As to quaternary structure, homotrimer. Mg(2+) is required as a cofactor.

The protein localises to the cytoplasm. It carries out the reaction alpha-D-glucosamine 1-phosphate + acetyl-CoA = N-acetyl-alpha-D-glucosamine 1-phosphate + CoA + H(+). The catalysed reaction is N-acetyl-alpha-D-glucosamine 1-phosphate + UTP + H(+) = UDP-N-acetyl-alpha-D-glucosamine + diphosphate. The protein operates within nucleotide-sugar biosynthesis; UDP-N-acetyl-alpha-D-glucosamine biosynthesis; N-acetyl-alpha-D-glucosamine 1-phosphate from alpha-D-glucosamine 6-phosphate (route II): step 2/2. It participates in nucleotide-sugar biosynthesis; UDP-N-acetyl-alpha-D-glucosamine biosynthesis; UDP-N-acetyl-alpha-D-glucosamine from N-acetyl-alpha-D-glucosamine 1-phosphate: step 1/1. Its pathway is bacterial outer membrane biogenesis; LPS lipid A biosynthesis. Its function is as follows. Catalyzes the last two sequential reactions in the de novo biosynthetic pathway for UDP-N-acetylglucosamine (UDP-GlcNAc). The C-terminal domain catalyzes the transfer of acetyl group from acetyl coenzyme A to glucosamine-1-phosphate (GlcN-1-P) to produce N-acetylglucosamine-1-phosphate (GlcNAc-1-P), which is converted into UDP-GlcNAc by the transfer of uridine 5-monophosphate (from uridine 5-triphosphate), a reaction catalyzed by the N-terminal domain. This is Bifunctional protein GlmU from Shigella flexneri serotype 5b (strain 8401).